Consider the following 379-residue polypeptide: 3-dehydroquinate synthase (379 aa).

NAD(+) is bound by residues 67–72 (PGEKNK), 101–105 (GIILD), 125–126 (TT), K138, and K147. Residues E180, H242, and H258 each contribute to the Zn(2+) site.

It belongs to the sugar phosphate cyclases superfamily. Dehydroquinate synthase family. NAD(+) serves as cofactor. It depends on Co(2+) as a cofactor. The cofactor is Zn(2+).

It is found in the cytoplasm. It carries out the reaction 7-phospho-2-dehydro-3-deoxy-D-arabino-heptonate = 3-dehydroquinate + phosphate. The protein operates within metabolic intermediate biosynthesis; chorismate biosynthesis; chorismate from D-erythrose 4-phosphate and phosphoenolpyruvate: step 2/7. Catalyzes the conversion of 3-deoxy-D-arabino-heptulosonate 7-phosphate (DAHP) to dehydroquinate (DHQ). The chain is 3-dehydroquinate synthase from Chlamydia caviae (strain ATCC VR-813 / DSM 19441 / 03DC25 / GPIC) (Chlamydophila caviae).